Consider the following 41-residue polypeptide: Large ribosomal subunit protein bL36 (41 aa).

Belongs to the bacterial ribosomal protein bL36 family.

This Vibrio vulnificus (strain YJ016) protein is Large ribosomal subunit protein bL36.